We begin with the raw amino-acid sequence, 528 residues long: RNA polymerase sigma factor SigA (528 aa).

The segment covering 1–10 has biased composition (polar residues); that stretch reads MAATKASTAT. The tract at residues 1-211 is disordered; the sequence is MAATKASTAT…FVWDEDESEA (211 aa). Low complexity-rich tracts occupy residues 19-31, 38-56, and 80-92; these read TKSP…GAKT, AKSA…PAAR, and AAKS…PSAR. Residues 100–109 are compositionally biased toward basic and acidic residues; it reads APKDAQHEAA. Residues 110-173 show a composition bias toward acidic residues; that stretch reads TDPEDALDSV…DDEDHEDLEA (64 aa). The tract at residues 295–365 is sigma-70 factor domain-2; sequence LLEANLRLVV…TRAMADQART (71 aa). The Interaction with polymerase core subunit RpoC signature appears at 319–322; sequence DLIQ. The sigma-70 factor domain-3 stretch occupies residues 374-450; sequence EVINKLGRIQ…DSEAVVAVDA (77 aa). Residues 463 to 516 form a sigma-70 factor domain-4 region; sequence VLDTLSEREAGVVRLRFGLTDGQPRTLDEIGQVYGVTRERIRQIESKTMSKLRH. The H-T-H motif DNA-binding region spans 489–508; sequence LDEIGQVYGVTRERIRQIES.

It belongs to the sigma-70 factor family. RpoD/SigA subfamily. As to quaternary structure, interacts transiently with the RNA polymerase catalytic core.

It is found in the cytoplasm. Functionally, sigma factors are initiation factors that promote the attachment of RNA polymerase to specific initiation sites and are then released. This sigma factor is the primary sigma factor during exponential growth. The chain is RNA polymerase sigma factor SigA from Mycobacterium bovis (strain ATCC BAA-935 / AF2122/97).